Here is an 87-residue protein sequence, read N- to C-terminus: Translation initiation factor IF-1 1 (87 aa).

An S1-like domain is found at 1-72 (MAKEELLELD…TKGRINFRHK (72 aa)). A disordered region spans residues 68–87 (NFRHKDANSPRPPRTGQPRR). Residues 77 to 87 (PRPPRTGQPRR) show a composition bias toward pro residues.

The protein belongs to the IF-1 family. Component of the 30S ribosomal translation pre-initiation complex which assembles on the 30S ribosome in the order IF-2 and IF-3, IF-1 and N-formylmethionyl-tRNA(fMet); mRNA recruitment can occur at any time during PIC assembly.

It localises to the cytoplasm. Functionally, one of the essential components for the initiation of protein synthesis. Stabilizes the binding of IF-2 and IF-3 on the 30S subunit to which N-formylmethionyl-tRNA(fMet) subsequently binds. Helps modulate mRNA selection, yielding the 30S pre-initiation complex (PIC). Upon addition of the 50S ribosomal subunit IF-1, IF-2 and IF-3 are released leaving the mature 70S translation initiation complex. The sequence is that of Translation initiation factor IF-1 1 from Burkholderia lata (strain ATCC 17760 / DSM 23089 / LMG 22485 / NCIMB 9086 / R18194 / 383).